Here is a 937-residue protein sequence, read N- to C-terminus: Chaperone protein ClpD2, chloroplastic (937 aa).

The N-terminal 80 residues, 1-80, are a transit peptide targeting the chloroplast; that stretch reads MEACCCSSSS…FERFTERAVK (80 aa). Repeat regions lie at residues 81 to 137 and 152 to 217; these read AVVF…VGKE and FSGA…VQGE. The 137-residue stretch at 81–217 folds into the Clp R domain; sequence AVVFSQREAR…KQALTRVQGE (137 aa). The tract at residues 259–513 is i; it reads LALFCLDLTM…RMESFKRKKE (255 aa). ATP contacts are provided by residues 304–311 and 658–665; these read GEAGVGKT and GPTGVGKT. Residues 584-775 are II; that stretch reads VGSEEIARVT…LIVMTSNVGS (192 aa).

The protein belongs to the ClpA/ClpB family. ClpD subfamily. As to expression, highly expressed in stems, culms and leaves.

It localises to the plastid. The protein resides in the chloroplast. Its function is as follows. Molecular chaperone that may interact with a ClpP-like protease involved in degradation of denatured proteins in the chloroplast. The sequence is that of Chaperone protein ClpD2, chloroplastic (CLPD2) from Oryza sativa subsp. japonica (Rice).